We begin with the raw amino-acid sequence, 54 residues long: Potassium channel toxin alpha-KTx 14.3 (54 aa).

Positions 1 to 23 are cleaved as a signal peptide; that stretch reads MKIFFAILLILAVCSMAIWTVNG.

This sequence belongs to the short scorpion toxin superfamily. Potassium channel inhibitor family. Alpha-KTx 14 subfamily. Post-translationally, contains 3 disulfide bridges. As to expression, expressed by the venom gland.

The protein resides in the secreted. Potential blocker of potassium channels. The protein is Potassium channel toxin alpha-KTx 14.3 of Olivierus martensii (Manchurian scorpion).